The primary structure comprises 452 residues: MRSLTLLLSLSTALRSVAAPHPASPQGQIPLGGIPSASTSEVGIGIGIGIEEDPFPPAAGSGHNDLEDVINASPLLSFHRDLVSIESISGHEARAAAFVADFLEAHNFTVVKQPVAGDRVNIFASPRAHAHSRPEILLTSHLDTVPPFIPYSLHRNDSRPTDRQLIRIAGRGAVDAKASVAAQIFAALDILHADPSAPLGLLFVVGEEVGGDGMKAFSHDPRLNPAPSRFHTVIFGEPTDFALVAGHKGMLGFEVLASGRPAHSGYPWLGRSAVSAILPALRRVDALGHIPVHHGGLPASHKYGRTTLNIGVLEGGVATNVVPAAARADVAVRLAAGSVDDARAIIAAAVADATHRDPAVVVDFSRHLEAYPPQDLDVDVPGFEITTVNYGTDVPNLHLHPRPDGPVKRYLYGPGSIFVAHGENEGLTVGALEEAVGGYKKLVQAALERTRA.

The first 18 residues, 1–18, serve as a signal peptide directing secretion; sequence MRSLTLLLSLSTALRSVA. N-linked (GlcNAc...) asparagine glycans are attached at residues asparagine 107 and asparagine 156. Aspartate 175 contributes to the Zn(2+) binding site. Glutamate 207 serves as the catalytic Proton acceptor. Position 208 (glutamate 208) interacts with Zn(2+).

The protein belongs to the peptidase M20A family. Zn(2+) serves as cofactor.

It is found in the secreted. This chain is Probable carboxypeptidase ACLA_088580, found in Aspergillus clavatus (strain ATCC 1007 / CBS 513.65 / DSM 816 / NCTC 3887 / NRRL 1 / QM 1276 / 107).